Reading from the N-terminus, the 216-residue chain is Redox-sensing transcriptional repressor Rex (216 aa).

Residues 17 to 56 (IYFRYLTFLHDAGTDRISSAELSDAIKFDAATIRRDFSYF) constitute a DNA-binding region (H-T-H motif). Residue 91–96 (GAGNLG) coordinates NAD(+).

It belongs to the transcriptional regulatory Rex family. In terms of assembly, homodimer.

The protein localises to the cytoplasm. In terms of biological role, modulates transcription in response to changes in cellular NADH/NAD(+) redox state. The protein is Redox-sensing transcriptional repressor Rex of Leuconostoc citreum (strain KM20).